We begin with the raw amino-acid sequence, 180 residues long: Transcriptional repressor NrdR (180 aa).

Residues 3 to 34 fold into a zinc finger; sequence CPYCQNTSSRVLESRSTEAGQSIRRRRECLQC. One can recognise an ATP-cone domain in the interval 49 to 139; that stretch reads ISVLKKDKSK…VYGEFKGITD (91 aa). Positions 148–180 are disordered; that stretch reads QQEERESSSSPEWSDAGEEATVIEDSSQVMASS. Residues 171 to 180 are compositionally biased toward polar residues; sequence EDSSQVMASS.

Belongs to the NrdR family. The cofactor is Zn(2+).

Functionally, negatively regulates transcription of bacterial ribonucleotide reductase nrd genes and operons by binding to NrdR-boxes. The polypeptide is Transcriptional repressor NrdR (Gloeothece citriformis (strain PCC 7424) (Cyanothece sp. (strain PCC 7424))).